The chain runs to 362 residues: L-arginine:L-lysine amidinotransferase (362 aa).

Catalysis depends on residues Asp195 and His244. Cys346 serves as the catalytic Amidino-cysteine intermediate.

Belongs to the amidinotransferase family.

The enzyme catalyses L-lysine + L-arginine = L-homoarginine + L-ornithine. It carries out the reaction L-canavanine + L-ornithine = L-canaline + L-arginine + H(+). In terms of biological role, involved in the biosynthesis of phaseolotoxin, a nonhost-specific toxin which is a key component in the development of the halo blight disease of beans. Catalyzes the transfer of an amidino group from arginine to lysine to produce one molecule of homoarginine and one molecule of ornithine, both being precursors in the biosynthesis of phaseolotoxin. Can also use L-canavanine as an alternative amidine donor with L-ornithine as amidine acceptor. The protein is L-arginine:L-lysine amidinotransferase of Pseudomonas savastanoi pv. phaseolicola (Pseudomonas syringae pv. phaseolicola).